The following is a 135-amino-acid chain: Small ribosomal subunit protein bS6 (135 aa).

The disordered stretch occupies residues 98-135 (EASPMAKAKDERDARRAAISERSSEADEVEENAEESAE). A compositionally biased stretch (basic and acidic residues) spans 104 to 122 (KAKDERDARRAAISERSSE). Residues 123 to 135 (ADEVEENAEESAE) show a composition bias toward acidic residues.

It belongs to the bacterial ribosomal protein bS6 family.

In terms of biological role, binds together with bS18 to 16S ribosomal RNA. The protein is Small ribosomal subunit protein bS6 of Shewanella amazonensis (strain ATCC BAA-1098 / SB2B).